Here is a 269-residue protein sequence, read N- to C-terminus: UPF0739 protein C1orf74 (269 aa).

It belongs to the UPF0739 family.

The polypeptide is UPF0739 protein C1orf74 (C1orf74) (Homo sapiens (Human)).